Here is a 382-residue protein sequence, read N- to C-terminus: Galactokinase (382 aa).

Substrate is bound at residue Glu-34 to Asp-37. Gly-124–Ser-130 contacts ATP. The Mg(2+) site is built by Ser-130 and Glu-162. The active-site Proton acceptor is Asp-174. Tyr-223 lines the substrate pocket.

It belongs to the GHMP kinase family. GalK subfamily.

The protein localises to the cytoplasm. The catalysed reaction is alpha-D-galactose + ATP = alpha-D-galactose 1-phosphate + ADP + H(+). The protein operates within carbohydrate metabolism; galactose metabolism. In terms of biological role, catalyzes the transfer of the gamma-phosphate of ATP to D-galactose to form alpha-D-galactose-1-phosphate (Gal-1-P). The protein is Galactokinase of Shigella flexneri serotype 5b (strain 8401).